Consider the following 157-residue polypeptide: uncharacterized protein (157 aa).

Positions 1–157 are disordered; that stretch reads MNRGPPLRSR…SFSFLVPSNS (157 aa). A compositionally biased stretch (pro residues) spans 8–31; the sequence is RSRPPSSPPPASAFPGPSPFPSPS. Basic residues predominate over residues 62-71; the sequence is RTSHPPRCPH. The span at 76–95 shows a compositional bias: pro residues; it reads PSAPSPPFTPPHPLPTPTPS. Composition is skewed to low complexity over residues 96–117 and 124–157; these read SSPRSPWLSLAPLPTSSASLAS and SFSSPSSPSTSPLSPSSSSFPSSSSFSFLVPSNS.

This is an uncharacterized protein from Vitis vinifera (Grape).